Reading from the N-terminus, the 89-residue chain is uncharacterized protein (89 aa).

The signal sequence occupies residues 1–19 (MQLTKTQFVRCVFLLLANS).

This is an uncharacterized protein from Sulfolobus islandicus filamentous virus (isolate Iceland/Hveragerdi) (SIFV).